We begin with the raw amino-acid sequence, 79 residues long: Beta-hexatoxin-Mg1a (79 aa).

A signal peptide spans 1–20; sequence MKAPATTLILVMSLISVLWA. Positions 21–50 are excised as a propeptide; the sequence is TPDLEEGDLLAELGDLIATDDEYPMKPEER. Disulfide bonds link cysteine 52/cysteine 66, cysteine 59/cysteine 71, and cysteine 65/cysteine 76.

Belongs to the neurotoxin 15 family. 01 (magi-5) subfamily. As to expression, expressed by the venom gland.

Its subcellular location is the secreted. In terms of biological role, insect and vertebrate active toxin. Binds to site 4 of mammalian voltage-gated sodium channels and shifts the activation voltage of the mammalian Nav1.2a/SCN2A channel to more hyperpolarized voltages, whereas the insect channel, DmNav1 (para), is not affected. Competes for binding at site 3 of the insect sodium channel. Causes temporary paralysis when injected into lepidopteran larvae at 8.6 nmol/g. A low intracranial injection dose into mice causes lacrimation, closure of the eyes and sweating. A high injection dose causes extensive lacrimation and death. The sequence is that of Beta-hexatoxin-Mg1a from Macrothele gigas (Japanese funnel web spider).